A 648-amino-acid polypeptide reads, in one-letter code: MTPLLELKDIRRSYPAGDEQVEVLKGISLNIYAGEMVAIVGASGSGKSTLMNILGCLDKATSGTYRVAGQDIATLDADALAQLRREHFGFIFQRYHLLPHLTVEQNVEVPAVYAGLERKQRLLRAQELLQRLGLEDRTEYYPAQLSGGQQQRVSIARALMNGGQVILADEPTGALDSHSGEEVMAILHQLRDRGHTVIIVTHDPQVAAQAERVIEIRDGEIVRNPPAIEKVNVAGGTEPVVNTVSGWRQFVSGFNEALTMAWRALAANKMRTLLTMLGIIIGIASVVSIVVVGDAAKQMVLADIRSIGTNTIDVYPGKDFGDDDPQYQQALKYDDLIAIQKQPWVASATPAVSQNLRLRYNNVDVAASANGVSGDYFNVYGMTFSEGNTFNQEQLNGRAQVVVLDSNTRRQLFPHKADVVGEVILVGNMPARVIGVAEEKQSMFGSSKVLRVWLPYSTMSGRVMGQSWLNSITVRVKEGFDSAEAEQQLTRLLSLRHGKKDFFTWNMDGVLKTVEKTTRTLQLFLTLVAVISLVVGGIGVMNIMLVSVTERTREIGIRMAVGARASDVLQQFLIEAVLVCLVGGALGITLSLLIAFTLQLFLPGWEIGFSPLALLLAFLCSTATGILFGWLPARNAARLDPVDALARE.

Residues Leu5 to Thr243 enclose the ABC transporter domain. Gly41–Ser48 is an ATP binding site. 4 consecutive transmembrane segments (helical) span residues Leu273–Gly293, Leu523–Ile543, Ala576–Phe596, and Leu600–Cys620.

The protein belongs to the ABC transporter superfamily. Macrolide exporter (TC 3.A.1.122) family. Homodimer. Part of the tripartite efflux system MacAB-TolC, which is composed of an inner membrane transporter, MacB, a periplasmic membrane fusion protein, MacA, and an outer membrane component, TolC. The complex forms a large protein conduit and can translocate molecules across both the inner and outer membranes. Interacts with MacA.

It localises to the cell inner membrane. In terms of biological role, part of the tripartite efflux system MacAB-TolC. MacB is a non-canonical ABC transporter that contains transmembrane domains (TMD), which form a pore in the inner membrane, and an ATP-binding domain (NBD), which is responsible for energy generation. Confers resistance against macrolides. This Shigella flexneri protein is Macrolide export ATP-binding/permease protein MacB.